Here is a 313-residue protein sequence, read N- to C-terminus: Ribosomal RNA small subunit methyltransferase H (313 aa).

S-adenosyl-L-methionine is bound by residues 37-39 (GGH), aspartate 57, phenylalanine 82, aspartate 104, and glutamine 111.

The protein belongs to the methyltransferase superfamily. RsmH family.

It localises to the cytoplasm. It carries out the reaction cytidine(1402) in 16S rRNA + S-adenosyl-L-methionine = N(4)-methylcytidine(1402) in 16S rRNA + S-adenosyl-L-homocysteine + H(+). Its function is as follows. Specifically methylates the N4 position of cytidine in position 1402 (C1402) of 16S rRNA. This chain is Ribosomal RNA small subunit methyltransferase H, found in Alteromonas mediterranea (strain DSM 17117 / CIP 110805 / LMG 28347 / Deep ecotype).